A 335-amino-acid chain; its full sequence is Beta-1,4-mannooligosaccharide phosphorylase (335 aa).

This sequence belongs to the glycosyl hydrolase 130 family. In terms of assembly, homohexamer in solution.

It carries out the reaction [(1-&gt;4)-beta-D-mannosyl](n) + phosphate = [(1-&gt;4)-beta-D-mannosyl](n-1) + alpha-D-mannose 1-phosphate. Functionally, catalyzes the phosphorolysis of beta-1,4-mannooligosaccharides to mannose 1-phosphate (Man1P) and shorter mannooligosaccharides. Can also catalyze the phosphorolysis of 4-O-beta-D-mannopyranosyl-D-glucopyranose (Man-Glc), but shows higher activity toward longer mannooligosaccharides. Involved in a mannan catabolic pathway which feeds into glycolysis. This Ruminococcus albus (strain ATCC 27210 / DSM 20455 / JCM 14654 / NCDO 2250 / 7) protein is Beta-1,4-mannooligosaccharide phosphorylase.